A 298-amino-acid chain; its full sequence is Protein Bel-1 (298 aa).

The segment covering 1–17 (MASWEKEKELAHLHQPE) has biased composition (basic and acidic residues). Positions 1–46 (MASWEKEKELAHLHQPEDDPLPDLSLLLDMDQFEPTEGPDSNPGAE) are disordered. Residues 91-200 (SKWACARLIL…GEPLKPRVRA (110 aa)) mediate DNA binding. A Nuclear localization signal motif is present at residues 214 to 223 (ADRPKRSRWG). The interval 225–298 (APREQPNTSS…SGPPTGPSEN (74 aa)) is transactivation domain.

In terms of assembly, homodimer or homomultimer. Forms complexes with the host nuclear factors NFIA, NFIB, NFIC or NFIX.

It localises to the host nucleus. In terms of biological role, transcriptional transactivator that activates the viral internal promoter (IP), thereby enhancing its own expression. This transactivation is repressed by nuclear factor I. Also transactivates the long terminal repeat (LTR) promoter, thereby inducing structural gene expression, initiating the late phase of infection. It is therefore a key regulator of viral gene expression. It directly binds to and activates DNA target sites of viral promoters and those of distinct cellular genes. Required for viral replication. In Chlorocebus aethiops (Green monkey), this protein is Protein Bel-1 (bel1).